Here is a 113-residue protein sequence, read N- to C-terminus: Death-associated protein-like 1.S (113 aa).

Residues 1 to 53 are disordered; it reads MTKELKVQSSPQALKAGHLPAVKAGGMRVSKKQGNDENSAPEKNAKKTLQEKP.

It belongs to the DAP-DAPL1 family. In terms of assembly, associates with ribosomes; preventing translation. Interacts with eiF5a (eif5a and eif5a2); preventing translation.

Its function is as follows. Ribosome-binding protein that promotes ribosome hibernation, a process during which ribosomes are stabilized in an inactive state and preserved from proteasomal degradation. Acts via its association with eiF5a (eif5a and eif5a2) at the polypeptide exit tunnel of the ribosome, preventing mRNA translation. Plays a key role in ribosome hibernation in the mature egg by preventing mRNA translation, leading to ribosome inactivation. Ribosomes, which are produced in large quantities during oogenesis, are stored and translationally repressed in the egg and early embryo. The protein is Death-associated protein-like 1.S (dapl1.S) of Xenopus laevis (African clawed frog).